The primary structure comprises 384 residues: MNAVHFGAGNIGRGFIGEILAKNGFHITFVDVNETIIQALKERKSYTIELADASHQQINVENVTGLNNMTEPEKVVEAIAEADLVTTAIGPNILPRIAELIAQGIDARAEANCQKPLDIIACENMIGGSTFLAEEVAKYLKNPAYAEQWIGFPDAAVDRIVPLQKHEDPLFVQVEPFCEWVIDDTNRKAKEIQLEGVHYVADLEPYIERKLFSVNTGHATVAYTGALLGYQTIDEAMQDALVVAQLKSVLQETGKLLVAKWNFDEQEHAAYIEKIIQRFQNKYISDAITRVARTPIRKLGAQERFIRPIRELQERNLVSPHLLAMIGIVFNYHDPEDEQSRQLQEMLDQESVDTVIAEVTGIEDPETVKNIKQNVERYARPQVA.

3 to 14 (AVHFGAGNIGRG) lines the NAD(+) pocket.

It belongs to the mannitol dehydrogenase family. In terms of assembly, monomer.

The enzyme catalyses D-mannitol 1-phosphate + NAD(+) = beta-D-fructose 6-phosphate + NADH + H(+). The protein is Mannitol-1-phosphate 5-dehydrogenase (mtlD) of Enterococcus faecalis (strain ATCC 700802 / V583).